The primary structure comprises 263 residues: Protein PUN1 (263 aa).

Topologically, residues 1–6 (MRNFFT) are cytoplasmic. Residues 7-27 (LFFAAIFSLGALILAIVACAG) form a helical membrane-spanning segment. Topologically, residues 28-143 (STKNYSPINK…MTYYNNLVKC (116 aa)) are extracellular. Residue Asn-100 is glycosylated (N-linked (GlcNAc...) asparagine). The helical transmembrane segment at 144 to 164 (MFITILIGIVLTFVNLVFNVL) threads the bilayer. At 165–172 (RWIIHIRP) the chain is on the cytoplasmic side. A helical transmembrane segment spans residues 173–193 (LTWFGAFFSFFAFAALLVSIG). Residues 194–223 (SCLGTYSYIKYILKHNYSDYGISMSIGRNY) lie on the Extracellular side of the membrane. Residue Asn-209 is glycosylated (N-linked (GlcNAc...) asparagine). Residues 224–244 (QGLMWGAVVGALLNFILWCSV) traverse the membrane as a helical segment. Over 245-263 (RSRPTVIYANAPIEEKPLI) the chain is Cytoplasmic. Residue Lys-260 forms a Glycyl lysine isopeptide (Lys-Gly) (interchain with G-Cter in ubiquitin) linkage.

It belongs to the SUR7 family. Post-translationally, N-glycosylated.

Its subcellular location is the cell membrane. Contributes to the wild-type cellular response to nitrogen stress through signaling pathways that regulate the expression of genes involved in amino acid biosynthesis. Required for wild-type filamentous growth, cell growth, and cell-cell adhesion. This is Protein PUN1 (PUN1) from Saccharomyces cerevisiae (strain ATCC 204508 / S288c) (Baker's yeast).